Consider the following 396-residue polypeptide: Ribosomal RNA large subunit methyltransferase I (396 aa).

In terms of domain architecture, PUA spans 2-79 (AIRIKLKPGR…REEEIDRAFF (78 aa)).

The protein belongs to the methyltransferase superfamily. RlmI family.

It is found in the cytoplasm. The catalysed reaction is cytidine(1962) in 23S rRNA + S-adenosyl-L-methionine = 5-methylcytidine(1962) in 23S rRNA + S-adenosyl-L-homocysteine + H(+). Its function is as follows. Specifically methylates the cytosine at position 1962 (m5C1962) of 23S rRNA. The polypeptide is Ribosomal RNA large subunit methyltransferase I (Shewanella putrefaciens (strain CN-32 / ATCC BAA-453)).